A 327-amino-acid polypeptide reads, in one-letter code: MEQIPASIWTLTAGVVVTLISFWVGHHHGLLPEQASEQAPLVDNFFDIMLTIGTALFLVVQGAIILFVIRYRRRAGEEGDGLPVEGNLPLEAFWTAIPALIVIFLGIYSVDIFQRMGGLNPGDHAMHSMHAPKSGMAVVAQAPSKTTSDATALLAAAQPPEIGIGASPDVQGKAPDLVVDVAGMQYAWIFTYPDSGIVSGELHIPVGKDVQLNLSARDVIHSFWVPQFRLKQDAIPGVPTTRFKATKVGTYPVVCAELCGGYHGAMRTQVIVHTPEDFETWRRQNQAIATAPVIPSLRDRHIHEMGVTAELVAQVEAIAHDPSAEKL.

An N-terminal signal peptide occupies residues Met1–Trp23. 2 helical membrane passes run Leu56–Glu78 and Ala96–Gln114. Residues His221, Cys255, Cys259, and His263 each contribute to the Cu cation site.

The protein belongs to the cytochrome c oxidase subunit 2 family. It depends on Cu cation as a cofactor.

Its subcellular location is the cell membrane. It carries out the reaction 4 Fe(II)-[cytochrome c] + O2 + 8 H(+)(in) = 4 Fe(III)-[cytochrome c] + 2 H2O + 4 H(+)(out). In terms of biological role, subunits I and II form the functional core of the enzyme complex. Electrons originating in cytochrome c are transferred via heme a and Cu(A) to the binuclear center formed by heme a3 and Cu(B). In Thermostichus vulcanus (Synechococcus vulcanus), this protein is Cytochrome c oxidase subunit 2 (ctaC).